A 236-amino-acid chain; its full sequence is Methylosome subunit pICln (236 aa).

An N-acetylserine modification is found at S2. A phosphoserine mark is found at S95, S143, S192, S194, S197, and S209. The disordered stretch occupies residues 134-158 (LHPDPEDEDSDDYDGEEYDVEAHEQ). The span at 138–152 (PEDEDSDDYDGEEYD) shows a compositional bias: acidic residues. The residue at position 222 (T222) is a Phosphothreonine.

It belongs to the pICln (TC 1.A.47) family. In terms of assembly, component of the methylosome, a 20S complex containing at least PRMT5/SKB1, WDR77/MEP50 and CLNS1A/pICln. May mediate SNRPD1 and SNRPD3 methylation. Forms a 6S pICln-Sm complex composed of CLNS1A/pICln, SNRPD1, SNRPD2, SNRPE, SNRPF and SNRPG; ring-like structure where CLNS1A/pICln mimics additional Sm proteins and which is unable to assemble into the core snRNP. Interacts with LSM10 and LSM11. Expressed in most tissues.

The protein resides in the cytoplasm. Its subcellular location is the cytosol. The protein localises to the nucleus. It localises to the cytoskeleton. Involved in both the assembly of spliceosomal snRNPs and the methylation of Sm proteins. Chaperone that regulates the assembly of spliceosomal U1, U2, U4 and U5 small nuclear ribonucleoproteins (snRNPs), the building blocks of the spliceosome, and thereby plays an important role in the splicing of cellular pre-mRNAs. Most spliceosomal snRNPs contain a common set of Sm proteins SNRPB, SNRPD1, SNRPD2, SNRPD3, SNRPE, SNRPF and SNRPG that assemble in a heptameric protein ring on the Sm site of the small nuclear RNA to form the core snRNP (Sm core). In the cytosol, the Sm proteins SNRPD1, SNRPD2, SNRPE, SNRPF and SNRPG are trapped in an inactive 6S pICln-Sm complex by the chaperone CLNS1A that controls the assembly of the core snRNP. Dissociation by the SMN complex of CLNS1A from the trapped Sm proteins and their transfer to an SMN-Sm complex triggers the assembly of core snRNPs and their transport to the nucleus. The chain is Methylosome subunit pICln (Clns1a) from Rattus norvegicus (Rat).